Consider the following 266-residue polypeptide: uncharacterized protein (266 aa).

The 150-residue stretch at 112–261 (LEKKIFISHS…KKWERIKAKF (150 aa)) folds into the TIR domain. Glutamate 192 is an active-site residue.

The catalysed reaction is NAD(+) + H2O = ADP-D-ribose + nicotinamide + H(+). This is an uncharacterized protein from Bacillus subtilis (strain 168).